The primary structure comprises 366 residues: Spermine synthase (366 aa).

N-acetylalanine is present on Ala-2. Ser-57 carries the phosphoserine modification. One can recognise a PABS domain in the interval 122–362 (RYWPTADGRL…ELWVFYTVWK (241 aa)). Position 148 (Gln-148) interacts with S-adenosyl 3-(methylsulfanyl)propylamine. 2 residues coordinate spermidine: Tyr-177 and Asp-201. S-adenosyl 3-(methylsulfanyl)propylamine-binding positions include Glu-220 and 255-256 (DC). The active-site Proton acceptor is Asp-276. 2 residues coordinate spermidine: Tyr-351 and Glu-353.

Belongs to the spermidine/spermine synthase family. As to quaternary structure, homodimer. Dimerization is mediated through the N-terminal domain and seems to be required for activity as deletion of the N-terminal domain causes complete loss of activity.

It carries out the reaction S-adenosyl 3-(methylsulfanyl)propylamine + spermidine = spermine + S-methyl-5'-thioadenosine + H(+). It participates in amine and polyamine biosynthesis; spermine biosynthesis; spermine from spermidine: step 1/1. Catalyzes the production of spermine from spermidine and decarboxylated S-adenosylmethionine (dcSAM). The sequence is that of Spermine synthase from Homo sapiens (Human).